A 620-amino-acid chain; its full sequence is Palmitoyltransferase ZDHHC17 (620 aa).

Residues methionine 1–lysine 292 are Cytoplasmic-facing. ANK repeat units lie at residues glutamate 77–glutamine 106, leucine 111–leucine 140, glutamate 144–methionine 173, asparagine 177–leucine 207, histidine 212–alanine 241, and lysine 245–tyrosine 274. The next 2 membrane-spanning stretches (helical) occupy residues valine 293 to isoleucine 313 and aspartate 314 to serine 334. The Cytoplasmic segment spans residues lysine 335–alanine 345. The helical transmembrane segment at leucine 346 to phenylalanine 366 threads the bilayer. Residues tryptophan 367 to aspartate 369 are Lumenal-facing. The chain crosses the membrane as a helical span at residues leucine 370–phenylalanine 390. Topologically, residues glycine 391 to tyrosine 469 are cytoplasmic. In terms of domain architecture, DHHC spans isoleucine 425–phenylalanine 475. Residue cysteine 455 is the S-palmitoyl cysteine intermediate of the active site. Residues phenylalanine 470 to cysteine 490 form a helical membrane-spanning segment. Topologically, residues tyrosine 491–glycine 504 are lumenal. A helical membrane pass occupies residues phenylalanine 505–leucine 524. Residues asparagine 525–valine 620 are Cytoplasmic-facing.

This sequence belongs to the DHHC palmitoyltransferase family. AKR/ZDHHC17 subfamily. Autopalmitoylated.

It localises to the golgi apparatus membrane. The protein localises to the cytoplasmic vesicle membrane. Its subcellular location is the presynaptic cell membrane. It catalyses the reaction L-cysteinyl-[protein] + hexadecanoyl-CoA = S-hexadecanoyl-L-cysteinyl-[protein] + CoA. It carries out the reaction L-cysteinyl-[protein] + tetradecanoyl-CoA = S-tetradecanoyl-L-cysteinyl-[protein] + CoA. The enzyme catalyses L-cysteinyl-[protein] + octadecanoyl-CoA = S-octadecanoyl-L-cysteinyl-[protein] + CoA. Functionally, palmitoyltransferase that catalyzes the addition of palmitate onto various protein substrates and is involved in a variety of cellular processes. Has no stringent fatty acid selectivity and in addition to palmitate can also transfer onto target proteins myristate from tetradecanoyl-CoA and stearate from octadecanoyl-CoA. Plays a role in axonogenesis. The chain is Palmitoyltransferase ZDHHC17 from Danio rerio (Zebrafish).